Reading from the N-terminus, the 235-residue chain is Sugar fermentation stimulation protein homolog (235 aa).

Belongs to the SfsA family.

The sequence is that of Sugar fermentation stimulation protein homolog from Aliivibrio salmonicida (strain LFI1238) (Vibrio salmonicida (strain LFI1238)).